A 415-amino-acid chain; its full sequence is MKAVGLVVEYNPFHNGHLYHAQTAKLQTGCDTAVAVMSGHFLQRGEPAVVSKWARTKMALQSGVDLVIELPYLYAVQKADIFARGSVSILNELECEALFFGSENGDIKPFLETAQLIDEHKHILNDRIKEELKKGASYPAAAAIAFSSILHTESALDLSKPNNILGYQYVTSILTGGYPMKPYTTARISSDYHDADLPEGENHIASATSIRKAMIGQNLEACLRFLPAASARELAAYRKSFGLWHTPESYFSYLKYSLSTVTARELQQVYEVEEGLEHRIIRSIRKSSSYQEFMELLKTKRYTWTRLQRMNTHILTRTKKQDMQKLLDNDKAPYIRLLGMTKKGQAYLSEKKKALSVPLVSKLSSFSHPALDLDVKASRIYSLPIEEPLRTEFDLQEYGHAPIRYDEDEQHFLNV.

Residues 7 to 20 (VVEY…HLYH), Gly101, Asn162, and 187 to 188 (RI) contribute to the ATP site.

This sequence belongs to the TmcAL family. In terms of assembly, homodimer.

It localises to the cytoplasm. It carries out the reaction cytidine(34) in elongator tRNA(Met) + acetate + ATP = N(4)-acetylcytidine(34) in elongator tRNA(Met) + AMP + diphosphate. Catalyzes the formation of N(4)-acetylcytidine (ac(4)C) at the wobble position of elongator tRNA(Met), using acetate and ATP as substrates. First activates an acetate ion to form acetyladenylate (Ac-AMP) and then transfers the acetyl group to tRNA to form ac(4)C34. The polypeptide is tRNA(Met) cytidine acetate ligase (Bacillus subtilis (strain 168)).